The sequence spans 213 residues: ATP-dependent dethiobiotin synthetase BioD (213 aa).

12 to 17 (NVGKTF) contributes to the ATP binding site. A Mg(2+)-binding site is contributed by Thr-16. The active site involves Lys-36. A substrate-binding site is contributed by Ser-40. ATP-binding positions include Asp-53, 110-113 (EGTG), and 170-171 (NQ). Mg(2+) is bound by residues Asp-53 and Glu-110.

The protein belongs to the dethiobiotin synthetase family. Homodimer. Mg(2+) is required as a cofactor.

It is found in the cytoplasm. The enzyme catalyses (7R,8S)-7,8-diammoniononanoate + CO2 + ATP = (4R,5S)-dethiobiotin + ADP + phosphate + 3 H(+). It functions in the pathway cofactor biosynthesis; biotin biosynthesis; biotin from 7,8-diaminononanoate: step 1/2. Its function is as follows. Catalyzes a mechanistically unusual reaction, the ATP-dependent insertion of CO2 between the N7 and N8 nitrogen atoms of 7,8-diaminopelargonic acid (DAPA, also called 7,8-diammoniononanoate) to form a ureido ring. This chain is ATP-dependent dethiobiotin synthetase BioD, found in Ruthia magnifica subsp. Calyptogena magnifica.